The primary structure comprises 460 residues: Bifunctional protein GlmU (460 aa).

The tract at residues 1-232 (MALNVVILAA…AIEVEGANNR (232 aa)) is pyrophosphorylase. UDP-N-acetyl-alpha-D-glucosamine is bound by residues 8 to 11 (LAAG), K22, Q73, 78 to 79 (GT), 100 to 102 (YGD), G137, E157, N172, and N230. D102 is a Mg(2+) binding site. N230 contributes to the Mg(2+) binding site. Positions 233–253 (VQLAQLERAYQAREAEKLMLA) are linker. An N-acetyltransferase region spans residues 254–460 (GANLRDPSRI…GWQRPVKIKK (207 aa)). UDP-N-acetyl-alpha-D-glucosamine contacts are provided by R336 and K354. Catalysis depends on H366, which acts as the Proton acceptor. Residues Y369 and N380 each coordinate UDP-N-acetyl-alpha-D-glucosamine. Residues A383, 389 to 390 (NY), S408, A426, and R443 contribute to the acetyl-CoA site.

This sequence in the N-terminal section; belongs to the N-acetylglucosamine-1-phosphate uridyltransferase family. The protein in the C-terminal section; belongs to the transferase hexapeptide repeat family. Homotrimer. Requires Mg(2+) as cofactor.

The protein localises to the cytoplasm. It catalyses the reaction alpha-D-glucosamine 1-phosphate + acetyl-CoA = N-acetyl-alpha-D-glucosamine 1-phosphate + CoA + H(+). The enzyme catalyses N-acetyl-alpha-D-glucosamine 1-phosphate + UTP + H(+) = UDP-N-acetyl-alpha-D-glucosamine + diphosphate. It functions in the pathway nucleotide-sugar biosynthesis; UDP-N-acetyl-alpha-D-glucosamine biosynthesis; N-acetyl-alpha-D-glucosamine 1-phosphate from alpha-D-glucosamine 6-phosphate (route II): step 2/2. The protein operates within nucleotide-sugar biosynthesis; UDP-N-acetyl-alpha-D-glucosamine biosynthesis; UDP-N-acetyl-alpha-D-glucosamine from N-acetyl-alpha-D-glucosamine 1-phosphate: step 1/1. Its pathway is bacterial outer membrane biogenesis; LPS lipid A biosynthesis. Catalyzes the last two sequential reactions in the de novo biosynthetic pathway for UDP-N-acetylglucosamine (UDP-GlcNAc). The C-terminal domain catalyzes the transfer of acetyl group from acetyl coenzyme A to glucosamine-1-phosphate (GlcN-1-P) to produce N-acetylglucosamine-1-phosphate (GlcNAc-1-P), which is converted into UDP-GlcNAc by the transfer of uridine 5-monophosphate (from uridine 5-triphosphate), a reaction catalyzed by the N-terminal domain. The polypeptide is Bifunctional protein GlmU (Shewanella baltica (strain OS155 / ATCC BAA-1091)).